We begin with the raw amino-acid sequence, 64 residues long: MAVQKSRVTPSRRGQRRSHDALTAKQLSTDPTSGEIHLRHHITADGYYRGKKVITTKSSAVQED.

The segment at 1 to 35 (MAVQKSRVTPSRRGQRRSHDALTAKQLSTDPTSGE) is disordered.

This sequence belongs to the bacterial ribosomal protein bL32 family.

The protein is Large ribosomal subunit protein bL32 of Xanthomonas campestris pv. campestris (strain 8004).